The chain runs to 443 residues: Ribosomal protein uS12 methylthiotransferase RimO (443 aa).

One can recognise an MTTase N-terminal domain in the interval 5-115 (PNIGFISLGC…VMKHVHKYVP (111 aa)). C14, C50, C79, C147, C151, and C154 together coordinate [4Fe-4S] cluster. Positions 133–374 (LTPKHYAYLK…MQLQQKISAE (242 aa)) constitute a Radical SAM core domain. The TRAM domain occupies 377-443 (RQKIGRTLSV…ADEYDLWGEI (67 aa)).

Belongs to the methylthiotransferase family. RimO subfamily. It depends on [4Fe-4S] cluster as a cofactor.

The protein resides in the cytoplasm. It catalyses the reaction L-aspartate(89)-[ribosomal protein uS12]-hydrogen + (sulfur carrier)-SH + AH2 + 2 S-adenosyl-L-methionine = 3-methylsulfanyl-L-aspartate(89)-[ribosomal protein uS12]-hydrogen + (sulfur carrier)-H + 5'-deoxyadenosine + L-methionine + A + S-adenosyl-L-homocysteine + 2 H(+). Catalyzes the methylthiolation of an aspartic acid residue of ribosomal protein uS12. The polypeptide is Ribosomal protein uS12 methylthiotransferase RimO (Histophilus somni (strain 2336) (Haemophilus somnus)).